We begin with the raw amino-acid sequence, 66 residues long: FMRFamide-like neuropeptides 24 (66 aa).

Positions 1–22 (MSRTSIILVLAIFVAIAAIAQC) are cleaved as a signal peptide. A propeptide spanning residues 23–48 (RNIQYDVDEISPEAAFRYAQWGEIPH) is cleaved from the precursor. The residue at position 61 (phenylalanine 61) is a Phenylalanine amide. Residues 65–66 (SV) constitute a propeptide that is removed on maturation.

It belongs to the FARP (FMRFamide related peptide) family.

The protein localises to the secreted. Its function is as follows. FMRFamides and FMRFamide-like peptides are neuropeptides. This Caenorhabditis briggsae protein is FMRFamide-like neuropeptides 24.